Reading from the N-terminus, the 335-residue chain is Dihydroorotate dehydrogenase (quinone) (335 aa).

FMN is bound by residues 58-62 and Thr-82; that span reads AGADK. Lys-62 is a binding site for substrate. 107 to 111 provides a ligand contact to substrate; sequence NRNGF. FMN is bound by residues Asn-135 and Asn-168. Residue Asn-168 participates in substrate binding. Ser-171 (nucleophile) is an active-site residue. A substrate-binding site is contributed by Asn-173. Positions 213 and 241 each coordinate FMN. Position 242–243 (242–243) interacts with substrate; the sequence is NT. FMN contacts are provided by residues Gly-264, Gly-293, and 314 to 315; that span reads YS.

It belongs to the dihydroorotate dehydrogenase family. Type 2 subfamily. In terms of assembly, monomer. Requires FMN as cofactor.

Its subcellular location is the cell membrane. It carries out the reaction (S)-dihydroorotate + a quinone = orotate + a quinol. Its pathway is pyrimidine metabolism; UMP biosynthesis via de novo pathway; orotate from (S)-dihydroorotate (quinone route): step 1/1. Catalyzes the conversion of dihydroorotate to orotate with quinone as electron acceptor. This is Dihydroorotate dehydrogenase (quinone) from Actinobacillus pleuropneumoniae serotype 7 (strain AP76).